An 891-amino-acid polypeptide reads, in one-letter code: Aconitate hydratase A (891 aa).

Positions 435, 501, and 504 each coordinate [4Fe-4S] cluster.

Belongs to the aconitase/IPM isomerase family. As to quaternary structure, monomer. It depends on [4Fe-4S] cluster as a cofactor.

It catalyses the reaction citrate = D-threo-isocitrate. It functions in the pathway carbohydrate metabolism; tricarboxylic acid cycle; isocitrate from oxaloacetate: step 2/2. Functionally, catalyzes the reversible isomerization of citrate to isocitrate via cis-aconitate. The apo form of AcnA functions as a RNA-binding regulatory protein which plays a role as a maintenance or survival enzyme during nutritional or oxidative stress. During oxidative stress inactive AcnA apo-enzyme without iron sulfur clusters binds the acnA mRNA 3' UTRs (untranslated regions), stabilizes acnA mRNA and increases AcnA synthesis, thus mediating a post-transcriptional positive autoregulatory switch. AcnA also enhances the stability of the sodA transcript. This chain is Aconitate hydratase A, found in Escherichia coli (strain K12).